Here is a 225-residue protein sequence, read N- to C-terminus: Suppressor of cytokine signaling 3 (225 aa).

Residues 22–33 (LKTFSSKSEYQL) form a kinase inhibitory region (KIR) region. Residues 34–45 (VVNAVRKLQESG) form an extended SH2 subdomain (ESS) region. The SH2 domain maps to 46-142 (FYWSAVTGGE…TPSFSLPPTE (97 aa)). Residues 131 to 160 (PGTPSFSLPPTEPSSEVPEQPPAQALPGST) are disordered. An SOCS box domain is found at 177–224 (VLSRPLSSNVATLQHLCRKTVNGHLDSYEKVTQLPGPIREFLDQYDAP).

Interacts with multiple activated proteins of the tyrosine kinase signaling pathway including IGF1 receptor, insulin receptor and JAK2. Binding to JAK2 is mediated through the KIR and SH2 domains to a phosphorylated tyrosine residue within the JAK2 JH1 domain. Binds specific activated tyrosine residues of the leptin, EPO, IL12, GSCF and gp130 receptors. Interaction with CSNK1E stabilizes SOCS3 protein. Component of the probable ECS(SOCS3) E3 ubiquitin-protein ligase complex which contains CUL5, RNF7/RBX2, elongin BC complex and SOCS3. Interacts with CUL5, RNF7, ELOB and ELOC. Interacts with FGFR3. Interacts with INSR. Interacts with BCL10; this interaction may interfere with BCL10-binding with PELI2. Interacts with NOD2 (via CARD domain); the interaction promotes NOD2 degradation. Post-translationally, phosphorylated on tyrosine residues after stimulation by the cytokines, IL-2, EPO or IGF1. As to expression, low expression in lung, spleen and thymus. Expressed in Th2 but not TH1 cells.

It participates in protein modification; protein ubiquitination. Its function is as follows. SOCS family proteins form part of a classical negative feedback system that regulates cytokine signal transduction. SOCS3 is involved in negative regulation of cytokines that signal through the JAK/STAT pathway. Inhibits cytokine signal transduction by binding to tyrosine kinase receptors including IL6ST/gp130, LIF, erythropoietin, insulin, IL12, GCSF and leptin receptors. Binding to JAK2 inhibits its kinase activity and regulates IL6 signaling. Suppresses fetal liver erythropoiesis. Regulates onset and maintenance of allergic responses mediated by T-helper type 2 cells. Probable substrate recognition component of a SCF-like ECS (Elongin BC-CUL2/5-SOCS-box protein) E3 ubiquitin-protein ligase complex which mediates the ubiquitination and subsequent proteasomal degradation of target proteins. The protein is Suppressor of cytokine signaling 3 of Mus musculus (Mouse).